The chain runs to 260 residues: Global transcriptional regulator CodY (260 aa).

The tract at residues 1–159 (MPNLLEKTRK…SSTVVGIQLL (159 aa)) is GAF domain. A DNA-binding region (H-T-H motif) is located at residues 207–226 (ASVIADRIGITRSVIVNALR).

This sequence belongs to the CodY family.

The protein localises to the cytoplasm. Its function is as follows. DNA-binding global transcriptional regulator which is involved in the adaptive response to starvation and acts by directly or indirectly controlling the expression of numerous genes in response to nutrient availability. During rapid exponential growth, CodY is highly active and represses genes whose products allow adaptation to nutrient depletion. This Streptococcus pyogenes serotype M3 (strain SSI-1) protein is Global transcriptional regulator CodY.